Consider the following 129-residue polypeptide: Selenoprotein M (129 aa).

The N-terminal stretch at 1 to 19 (MARGLAVFFLLAGACLALA) is a signal peptide. Active-site nucleophile residues include Cys35 and Sec38. A non-standard amino acid (selenocysteine) is located at residue Sec38. Residues 107 to 129 (KSSKDEQVPEEYQEGPYMEKEEL) form a disordered region. The Prevents secretion from ER signature appears at 126-129 (KEEL).

Belongs to the selenoprotein M/F family. High expression levels observed in hepatopancreas, testis, ovaries and intestine. Also expressed in heart, stomach, gills, cranial ganglia, muscle and hematocytes.

The protein resides in the endoplasmic reticulum. Its function is as follows. May function as a thiol-disulfide oxidoreductase that participates in disulfide bond formation. Involved in the regulation of reproduction during the period of rapid gonadal development. In Eriocheir sinensis (Chinese mitten crab), this protein is Selenoprotein M.